A 1066-amino-acid polypeptide reads, in one-letter code: Thyrotropin-releasing hormone-degrading ectoenzyme (1066 aa).

The span at 1–14 (MALDGERGEQEEEK) shows a compositional bias: basic and acidic residues. The tract at residues 1-43 (MALDGERGEQEEEKKKKKKKKKRKKKEEEGAEKSSSPFAATMG) is disordered. The Cytoplasmic portion of the chain corresponds to 1–81 (MALDGERGEQ…ERHIAVHKRL (81 aa)). Basic residues predominate over residues 15–25 (KKKKKKKKRKK). The residue at position 71 (threonine 71) is a Phosphothreonine; by PKC. Residues 82–102 (VLAFAVSIVALLAVTMLAVLL) form a helical; Signal-anchor for type II membrane protein membrane-spanning segment. The Extracellular segment spans residues 103–1066 (SLRFDECGAS…FQWLGKAMRH (964 aa)). Positions 118 to 176 (TDGGLGGFPERDSNSSFPGSARRNHHAGGESSQRESGEVGTPGTPSAQPPSEEEREQWQ) are disordered. 5 N-linked (GlcNAc...) asparagine glycosylation sites follow: asparagine 131, asparagine 202, asparagine 217, asparagine 264, and asparagine 380. 446 to 450 (AAMEN) lines the substrate pocket. A Zn(2+)-binding site is contributed by histidine 482. The active-site Proton acceptor is glutamate 483. Zn(2+) is bound by residues histidine 486 and glutamate 505. N-linked (GlcNAc...) asparagine glycans are attached at residues asparagine 647, asparagine 676, asparagine 691, asparagine 705, asparagine 726, asparagine 842, and asparagine 948.

This sequence belongs to the peptidase M1 family. As to quaternary structure, homodimer; disulfide-linked. Zn(2+) serves as cofactor.

It is found in the membrane. The catalysed reaction is Release of the N-terminal pyroglutamyl group from pGlu-|-His-Xaa tripeptides and pGlu-|-His-Xaa-Gly tetrapeptides.. Functionally, specific inactivation of TRH after its release. This is Thyrotropin-releasing hormone-degrading ectoenzyme (Trhde) from Mus musculus (Mouse).